Reading from the N-terminus, the 293-residue chain is Ribosomal protein L11 methyltransferase (293 aa).

Residues T145, G166, D188, and N229 each contribute to the S-adenosyl-L-methionine site.

Belongs to the methyltransferase superfamily. PrmA family.

The protein localises to the cytoplasm. The catalysed reaction is L-lysyl-[protein] + 3 S-adenosyl-L-methionine = N(6),N(6),N(6)-trimethyl-L-lysyl-[protein] + 3 S-adenosyl-L-homocysteine + 3 H(+). In terms of biological role, methylates ribosomal protein L11. This chain is Ribosomal protein L11 methyltransferase, found in Idiomarina loihiensis (strain ATCC BAA-735 / DSM 15497 / L2-TR).